Reading from the N-terminus, the 156-residue chain is Small ribosomal subunit protein bS16 (156 aa).

The segment at 114–156 is disordered; the sequence is ENEPVAEAITPKKKKAAKADEAKAEDTAADAEAPAADAEAADK. Basic and acidic residues predominate over residues 130–139; that stretch reads AKADEAKAED. Low complexity predominate over residues 143–156; it reads DAEAPAADAEAADK.

It belongs to the bacterial ribosomal protein bS16 family.

The sequence is that of Small ribosomal subunit protein bS16 from Rhodococcus erythropolis (strain PR4 / NBRC 100887).